A 219-amino-acid polypeptide reads, in one-letter code: Large ribosomal subunit protein bL25 (219 aa).

Residues 193 to 219 form a disordered region; it reads VSSTELEETPEVPASAVPTTDQGESAE. The span at 209–219 shows a compositional bias: polar residues; sequence VPTTDQGESAE.

The protein belongs to the bacterial ribosomal protein bL25 family. CTC subfamily. As to quaternary structure, part of the 50S ribosomal subunit; part of the 5S rRNA/L5/L18/L25 subcomplex. Contacts the 5S rRNA. Binds to the 5S rRNA independently of L5 and L18.

Its function is as follows. This is one of the proteins that binds to the 5S RNA in the ribosome where it forms part of the central protuberance. The polypeptide is Large ribosomal subunit protein bL25 (Legionella pneumophila (strain Corby)).